The primary structure comprises 287 residues: 2-dehydro-3-deoxyphosphooctonate aldolase (287 aa).

Belongs to the KdsA family.

Its subcellular location is the cytoplasm. It catalyses the reaction D-arabinose 5-phosphate + phosphoenolpyruvate + H2O = 3-deoxy-alpha-D-manno-2-octulosonate-8-phosphate + phosphate. It participates in carbohydrate biosynthesis; 3-deoxy-D-manno-octulosonate biosynthesis; 3-deoxy-D-manno-octulosonate from D-ribulose 5-phosphate: step 2/3. It functions in the pathway bacterial outer membrane biogenesis; lipopolysaccharide biosynthesis. This Caulobacter vibrioides (strain ATCC 19089 / CIP 103742 / CB 15) (Caulobacter crescentus) protein is 2-dehydro-3-deoxyphosphooctonate aldolase.